A 126-amino-acid polypeptide reads, in one-letter code: Phosphoribosyl-AMP cyclohydrolase (126 aa).

Asp82 contacts Mg(2+). Cys83 lines the Zn(2+) pocket. 2 residues coordinate Mg(2+): Asp84 and Asp86. The Zn(2+) site is built by Cys99 and Cys106.

The protein belongs to the PRA-CH family. As to quaternary structure, homodimer. It depends on Mg(2+) as a cofactor. The cofactor is Zn(2+).

Its subcellular location is the cytoplasm. It catalyses the reaction 1-(5-phospho-beta-D-ribosyl)-5'-AMP + H2O = 1-(5-phospho-beta-D-ribosyl)-5-[(5-phospho-beta-D-ribosylamino)methylideneamino]imidazole-4-carboxamide. Its pathway is amino-acid biosynthesis; L-histidine biosynthesis; L-histidine from 5-phospho-alpha-D-ribose 1-diphosphate: step 3/9. Catalyzes the hydrolysis of the adenine ring of phosphoribosyl-AMP. This Sphingopyxis alaskensis (strain DSM 13593 / LMG 18877 / RB2256) (Sphingomonas alaskensis) protein is Phosphoribosyl-AMP cyclohydrolase.